Here is a 91-residue protein sequence, read N- to C-terminus: UPF0250 protein NGK_1021 (91 aa).

Belongs to the UPF0250 family.

The sequence is that of UPF0250 protein NGK_1021 from Neisseria gonorrhoeae (strain NCCP11945).